The sequence spans 493 residues: MIDFSLFYNSTDHFSIIPAVMLALFGCAILLFDFLIFPDPRQRKFLLIFVVLAEAFTGFGLFRQQAWLAAQNAPELSGFGGSVTVDGFAIFFNWIFLVAAVVVAIVSYKYLEISGEHHGEYYSLILFAQCGMYFLATGTDLITLFIGLELMALCFYVMVGFLRTERRSNEAALKYLLLGAFSSGFLVYGFSVMYGIAGSTKLSDIAAAIASRPPWDPMVFLALSTTSVGLLFKVSAVPFHMWAPDAYEGAPTTVTAYLSVASKAASIAFLLRIFLGPLASARAVWEPLLAFIAIITLTIGNLAAINQTNIKRLLAYSSISHAGYMLLGLVAGNDTGIKGIAVYVMVYTFMNLGAFLVIIAMRRASIIGEDLDDLAGLVHKSPGYAFLMLIFLLSLAGIPPTAGFLGKYYIFLALIQTGHTGLAIVATLYVAVAIYYYFKIVRSMFIREEMEKTPMLATSFGLRCALALTGIATLAIGIYPEPFLRLAQTSLFR.

14 helical membrane-spanning segments follow: residues 16-36, 45-65, 87-107, 119-139, 141-161, 176-196, 219-239, 258-278, 285-305, 313-333, 340-360, 385-405, 421-441, and 464-484; these read IIPA…DFLI, FLLI…FRQQ, GFAI…AIVS, GEYY…ATGT, LITL…MVGF, LLLG…MYGI, VFLA…AVPF, LSVA…LGPL, WEPL…LAAI, LLAY…VAGN, IAVY…VIIA, AFLM…AGFL, GLAI…FKIV, and CALA…EPFL.

The protein belongs to the complex I subunit 2 family. As to quaternary structure, NDH-1 is composed of 14 different subunits. Subunits NuoA, H, J, K, L, M, N constitute the membrane sector of the complex.

It localises to the cell inner membrane. The enzyme catalyses a quinone + NADH + 5 H(+)(in) = a quinol + NAD(+) + 4 H(+)(out). NDH-1 shuttles electrons from NADH, via FMN and iron-sulfur (Fe-S) centers, to quinones in the respiratory chain. The immediate electron acceptor for the enzyme in this species is believed to be ubiquinone. Couples the redox reaction to proton translocation (for every two electrons transferred, four hydrogen ions are translocated across the cytoplasmic membrane), and thus conserves the redox energy in a proton gradient. The protein is NADH-quinone oxidoreductase subunit N 2 of Solibacter usitatus (strain Ellin6076).